The primary structure comprises 858 residues: G2-specific protein kinase nim-1 (858 aa).

The Protein kinase domain maps to 7-290 (YELLEKIGHG…TATLLNLPIV (284 aa)). Residues 13 to 21 (IGHGSFGII) and Lys-36 contribute to the ATP site. The Proton acceptor role is filled by Asp-161. Phosphothreonine; by autocatalysis is present on Thr-194. Positions 291-383 (RLMRKEKEVV…QARVEAELQR (93 aa)) form a coiled coil. 2 disordered regions span residues 495–693 (TKAP…LPQA) and 747–858 (SAVD…LSQS). Over residues 516–525 (SNWEVPRETE) the composition is skewed to basic and acidic residues. A compositionally biased stretch (acidic residues) spans 526 to 535 (MIDSGDESEA). Composition is skewed to polar residues over residues 548–572 (SSKNPFSTVTTRSRPSLNSQQNSNV) and 580–598 (SKQTLATRSKTVSGVSSIG). Residues 636 to 648 (SANNINNSSNGGS) show a composition bias toward low complexity. Residues 650 to 661 (APSSTVTSNITV) are compositionally biased toward polar residues. Over residues 676–691 (SSFSQQQNNQPQQSLP) the composition is skewed to low complexity. Polar residues predominate over residues 760 to 780 (GQSQLPTRPRSQPQPITANFE). The segment covering 781 to 802 (QQQQQQQSNTNSISSSNSAGSG) has biased composition (low complexity).

This sequence belongs to the protein kinase superfamily. CAMK Ser/Thr protein kinase family.

Its subcellular location is the nucleus. The catalysed reaction is L-seryl-[protein] + ATP = O-phospho-L-seryl-[protein] + ADP + H(+). It catalyses the reaction L-threonyl-[protein] + ATP = O-phospho-L-threonyl-[protein] + ADP + H(+). Functionally, protein kinase that plays an important role in mitotic regulation. The sequence is that of G2-specific protein kinase nim-1 (nim-1) from Neurospora crassa (strain ATCC 24698 / 74-OR23-1A / CBS 708.71 / DSM 1257 / FGSC 987).